We begin with the raw amino-acid sequence, 428 residues long: 3-phosphoshikimate 1-carboxyvinyltransferase (428 aa).

Residues Lys23, Ser24, and Arg28 each coordinate 3-phosphoshikimate. Lys23 serves as a coordination point for phosphoenolpyruvate. Gly97 and Arg125 together coordinate phosphoenolpyruvate. The 3-phosphoshikimate site is built by Ser170, Ser171, Gln172, Ser198, Asp314, Asn337, and Lys341. Gln172 lines the phosphoenolpyruvate pocket. Asp314 serves as the catalytic Proton acceptor. Phosphoenolpyruvate contacts are provided by Arg345, Arg387, and Lys412.

It belongs to the EPSP synthase family. In terms of assembly, monomer.

It localises to the cytoplasm. It catalyses the reaction 3-phosphoshikimate + phosphoenolpyruvate = 5-O-(1-carboxyvinyl)-3-phosphoshikimate + phosphate. The protein operates within metabolic intermediate biosynthesis; chorismate biosynthesis; chorismate from D-erythrose 4-phosphate and phosphoenolpyruvate: step 6/7. Catalyzes the transfer of the enolpyruvyl moiety of phosphoenolpyruvate (PEP) to the 5-hydroxyl of shikimate-3-phosphate (S3P) to produce enolpyruvyl shikimate-3-phosphate and inorganic phosphate. This Buchnera aphidicola subsp. Schizaphis graminum (strain Sg) protein is 3-phosphoshikimate 1-carboxyvinyltransferase.